The chain runs to 160 residues: Cytochrome b6-f complex subunit 4 (160 aa).

3 consecutive transmembrane segments (helical) span residues 36-56, 95-115, and 131-151; these read LLYI…GLAV, LLGV…PFLE, and TVFL…TLPI.

Belongs to the cytochrome b family. PetD subfamily. The 4 large subunits of the cytochrome b6-f complex are cytochrome b6, subunit IV (17 kDa polypeptide, petD), cytochrome f and the Rieske protein, while the 4 small subunits are petG, petL, petM and petN. The complex functions as a dimer.

It is found in the plastid. The protein resides in the chloroplast thylakoid membrane. Component of the cytochrome b6-f complex, which mediates electron transfer between photosystem II (PSII) and photosystem I (PSI), cyclic electron flow around PSI, and state transitions. This chain is Cytochrome b6-f complex subunit 4, found in Amborella trichopoda.